A 297-amino-acid chain; its full sequence is Small ribosomal subunit biogenesis GTPase RsgA (297 aa).

The CP-type G domain occupies R65–I223. GTP-binding positions include T114 to D117 and G166 to T174. Zn(2+) contacts are provided by C247, C252, H254, and C260.

Belongs to the TRAFAC class YlqF/YawG GTPase family. RsgA subfamily. In terms of assembly, monomer. Associates with 30S ribosomal subunit, binds 16S rRNA. The cofactor is Zn(2+).

The protein resides in the cytoplasm. In terms of biological role, one of several proteins that assist in the late maturation steps of the functional core of the 30S ribosomal subunit. Helps release RbfA from mature subunits. May play a role in the assembly of ribosomal proteins into the subunit. Circularly permuted GTPase that catalyzes slow GTP hydrolysis, GTPase activity is stimulated by the 30S ribosomal subunit. The polypeptide is Small ribosomal subunit biogenesis GTPase RsgA (Enterococcus faecalis (strain ATCC 700802 / V583)).